We begin with the raw amino-acid sequence, 123 residues long: Small ribosomal subunit protein uS12 (123 aa).

Positions 1 to 22 (MATINQLVRQPRKRSVEKSDVP) are disordered. D89 bears the 3-methylthioaspartic acid mark. The interval 100–123 (GSLDTSGVKGRNQGRSKYGTKRPK) is disordered. Basic residues predominate over residues 111–123 (NQGRSKYGTKRPK).

The protein belongs to the universal ribosomal protein uS12 family. As to quaternary structure, part of the 30S ribosomal subunit. Contacts proteins S8 and S17. May interact with IF1 in the 30S initiation complex.

Its function is as follows. With S4 and S5 plays an important role in translational accuracy. In terms of biological role, interacts with and stabilizes bases of the 16S rRNA that are involved in tRNA selection in the A site and with the mRNA backbone. Located at the interface of the 30S and 50S subunits, it traverses the body of the 30S subunit contacting proteins on the other side and probably holding the rRNA structure together. The combined cluster of proteins S8, S12 and S17 appears to hold together the shoulder and platform of the 30S subunit. The chain is Small ribosomal subunit protein uS12 from Pseudomonas entomophila (strain L48).